Reading from the N-terminus, the 557-residue chain is Potassium-transporting ATPase potassium-binding subunit (557 aa).

12 helical membrane passes run 5–25 (GFLL…PLGS), 63–83 (LSAI…MLLG), 132–152 (GLTV…FALI), 170–190 (LLRI…LFFI), 253–273 (FVQM…FGEV), 283–303 (LLWA…WAEV), 329–349 (VLVS…AVIA), 356–376 (ALGG…FGGV), 379–399 (GLYG…LMIG), 416–436 (LTAL…ALAM), 484–504 (LLAL…MAIA), and 526–546 (LFVG…FIPA).

The protein belongs to the KdpA family. The system is composed of three essential subunits: KdpA, KdpB and KdpC.

The protein localises to the cell inner membrane. Functionally, part of the high-affinity ATP-driven potassium transport (or Kdp) system, which catalyzes the hydrolysis of ATP coupled with the electrogenic transport of potassium into the cytoplasm. This subunit binds the periplasmic potassium ions and delivers the ions to the membrane domain of KdpB through an intramembrane tunnel. The sequence is that of Potassium-transporting ATPase potassium-binding subunit from Escherichia coli (strain UTI89 / UPEC).